The sequence spans 299 residues: Taste receptor type 2 member 4 (299 aa).

The Extracellular portion of the chain corresponds to 1-9 (MLRLFYFSA). Residues 10–30 (IIASVILNFVGIIMNLFITVV) form a helical membrane-spanning segment. Residues 31-46 (NCKTWVKSHRISSSDR) lie on the Cytoplasmic side of the membrane. The helical transmembrane segment at 47–67 (ILFSLGITRFLMLGLFLVNTI) threads the bilayer. Residues 68–81 (YFVSSNTERSVYLS) are Extracellular-facing. Residues 82 to 102 (AFFVLCFMFLDSSSLWFVTLL) traverse the membrane as a helical segment. Over 103 to 131 (NILYCVKITNFQHSVFLLLKRNISPKIPR) the chain is Cytoplasmic. The helical transmembrane segment at 132 to 152 (LLLACVLISAFTTCLYITLSQ) threads the bilayer. Topologically, residues 153–172 (ASPFPELVTTRNNTSFNINE) are extracellular. 2 N-linked (GlcNAc...) asparagine glycosylation sites follow: Asn-164 and Asn-165. The chain crosses the membrane as a helical span at residues 173-193 (GILSLVVSLVLSSSLQFIINV). The Cytoplasmic segment spans residues 194–230 (TSASLLIHSLRRHIQKMQKNATGFWNPQTEAHVGAMK). A helical transmembrane segment spans residues 231 to 251 (LMVYFLILYIPYSVATLVQYL). At 252–262 (PFYAGMDMGTK) the chain is on the extracellular side. A helical transmembrane segment spans residues 263–283 (SICLIFATLYSPGHSVLIIIT). Residues 284–299 (HPKLKTTAKKILCFKK) lie on the Cytoplasmic side of the membrane.

The protein belongs to the G-protein coupled receptor T2R family.

The protein localises to the membrane. Its subcellular location is the cell projection. The protein resides in the cilium membrane. Gustducin-coupled receptor implicated in the perception of bitter compounds in the oral cavity and the gastrointestinal tract. Signals through PLCB2 and the calcium-regulated cation channel TRPM5. In airway epithelial cells, binding of denatonium increases the intracellular calcium ion concentration and stimulates ciliary beat frequency. This Pan paniscus (Pygmy chimpanzee) protein is Taste receptor type 2 member 4 (TAS2R4).